A 179-amino-acid polypeptide reads, in one-letter code: Large ribosomal subunit protein uL5 (179 aa).

This sequence belongs to the universal ribosomal protein uL5 family. As to quaternary structure, part of the 50S ribosomal subunit; part of the 5S rRNA/L5/L18/L25 subcomplex. Contacts the 5S rRNA and the P site tRNA. Forms a bridge to the 30S subunit in the 70S ribosome.

In terms of biological role, this is one of the proteins that bind and probably mediate the attachment of the 5S RNA into the large ribosomal subunit, where it forms part of the central protuberance. In the 70S ribosome it contacts protein S13 of the 30S subunit (bridge B1b), connecting the 2 subunits; this bridge is implicated in subunit movement. Contacts the P site tRNA; the 5S rRNA and some of its associated proteins might help stabilize positioning of ribosome-bound tRNAs. This chain is Large ribosomal subunit protein uL5, found in Shewanella sp. (strain ANA-3).